Consider the following 152-residue polypeptide: D-aminoacyl-tRNA deacylase (152 aa).

Residues 142-143 (GP) carry the Gly-cisPro motif, important for rejection of L-amino acids motif.

Belongs to the DTD family. As to quaternary structure, homodimer.

The protein resides in the cytoplasm. It catalyses the reaction glycyl-tRNA(Ala) + H2O = tRNA(Ala) + glycine + H(+). It carries out the reaction a D-aminoacyl-tRNA + H2O = a tRNA + a D-alpha-amino acid + H(+). An aminoacyl-tRNA editing enzyme that deacylates mischarged D-aminoacyl-tRNAs. Also deacylates mischarged glycyl-tRNA(Ala), protecting cells against glycine mischarging by AlaRS. Acts via tRNA-based rather than protein-based catalysis; rejects L-amino acids rather than detecting D-amino acids in the active site. By recycling D-aminoacyl-tRNA to D-amino acids and free tRNA molecules, this enzyme counteracts the toxicity associated with the formation of D-aminoacyl-tRNA entities in vivo and helps enforce protein L-homochirality. The polypeptide is D-aminoacyl-tRNA deacylase (Paraburkholderia phymatum (strain DSM 17167 / CIP 108236 / LMG 21445 / STM815) (Burkholderia phymatum)).